The chain runs to 351 residues: Ca(2+)/H(+) antiporter ChaA (351 aa).

11 consecutive transmembrane segments (helical) span residues 4-24, 25-45, 59-79, 86-106, 130-150, 156-176, 205-225, 241-261, 282-302, 303-323, and 331-351; these read IFFI…LMHW, PSAV…SYMG, IGGL…SLFA, GIVL…VAGL, GLLI…SVGM, LNLS…ALYF, VATI…ENLV, FIGV…SAII, IAMF…TSMP, LVFT…MIAI, and WFEG…FFLL.

It belongs to the Ca(2+):cation antiporter (CaCA) (TC 2.A.19) family. Cation/proton exchanger (CAX) subfamily. As to quaternary structure, homotrimer.

It localises to the cell membrane. Calcium efflux is tightly regulated by intracellular pH. Its function is as follows. Ca(+)/H(+) antiporter that extrudes calcium in exchange for external protons. Does not transport sodium or potassium. The sequence is that of Ca(2+)/H(+) antiporter ChaA (chaA) from Bacillus subtilis (strain 168).